Reading from the N-terminus, the 293-residue chain is Proteinase T (293 aa).

Residues 1 to 12 (EFIEQDAVVTIS) constitute a propeptide that is removed on maturation. The Peptidase S8 domain occupies 19-293 (PWGLARISSQ…VLINNGEGSA (275 aa)). 2 disulfides stabilise this stretch: cysteine 46–cysteine 137 and cysteine 192–cysteine 262. Residues aspartate 51, histidine 83, and serine 238 each act as charge relay system in the active site.

This sequence belongs to the peptidase S8 family.

Its function is as follows. Serine proteinase. The chain is Proteinase T (PROT) from Parengyodontium album (Tritirachium album).